The chain runs to 88 residues: Arminin 1c (88 aa).

The N-terminal stretch at 1-18 (MKPVFVILFLTCIAFTYA) is a signal peptide. The propeptide occupies 19–57 (ESYEDVKEEIKNEVEREIFEDLEEESDVLDSNVREFNDA). At Val85 the chain carries Valine amide.

This sequence belongs to the arminin family. In terms of tissue distribution, expressed in entodermal epithelium along the body column.

It localises to the secreted. The protein localises to the target cell membrane. Its function is as follows. Antimicrobial peptide with a broad-spectrum antimicrobial activity. Keeps its antibacterial activity under a wide range of salt concentrations that mimic physiological conditions of human blood, which is surprising, since Hydra is an obligate freshwater animal with nearly no salt tolerance. Does not affect red blood cells. This Hydra vulgaris (Hydra) protein is Arminin 1c.